A 562-amino-acid chain; its full sequence is Putative transport protein Spro_1639 (562 aa).

5 consecutive transmembrane segments (helical) span residues 8 to 28, 37 to 57, 66 to 86, 94 to 114, and 158 to 178; these read LLNGNYILLLFVVLALGLCLG, LGNSIGVLVVSLLLGQQHFAI, FMLFIFCVGVEAGPNFFSIFF, MLALVMVGSAMVIAIGLGKLF, and HLSLGYALTYLIGLVSLIFGA. RCK C-terminal domains follow at residues 202 to 288 and 290 to 373; these read LDTD…SFRN and KEVF…KIGF. 5 helical membrane-spanning segments follow: residues 383–403, 406–426, 447–467, 475–495, and 541–561; these read LLAFCAFFIIGLLIGQITIQF, FSFGIGNAAGLLMAGIMLGFL, FGLMVFMAGVGLSAGAGIGNS, MLIAGLIVSLVPVVICFLFGA, and IANVLLTLAGSLIVVLWPGIL.

It belongs to the AAE transporter (TC 2.A.81) family. YbjL subfamily.

It is found in the cell membrane. The protein is Putative transport protein Spro_1639 of Serratia proteamaculans (strain 568).